We begin with the raw amino-acid sequence, 501 residues long: Dynein regulatory complex subunit 5 (501 aa).

The segment covering 1-23 (MQDTVTTSALLDPSHSSVSTQDN) has biased composition (polar residues). 2 disordered regions span residues 1–56 (MQDT…HPRA) and 202–222 (LPAQ…EMEE). A compositionally biased stretch (low complexity) spans 24-34 (SSTGGHTSSTS). 5 LRR repeats span residues 308–321 (VLEE…LIGD), 335–355 (RLRV…QSLA), 363–383 (NLIS…QALA), 391–411 (CLTT…TLLS), and 419–439 (TLTS…KQLL).

It belongs to the DRC5 family. In terms of assembly, component of the nexin-dynein regulatory complex (N-DRC). Interacts with DRC1. Interacts with FBXL13/DRC6, DRC3 and DRC7.

Its subcellular location is the cell projection. The protein resides in the cilium. It localises to the flagellum. The protein localises to the cytoplasm. It is found in the cytoskeleton. Its subcellular location is the flagellum axoneme. Its function is as follows. Component of the nexin-dynein regulatory complex (N-DRC) a key regulator of ciliary/flagellar motility which maintains the alignment and integrity of the distal axoneme and regulates microtubule sliding in motile axonemes. May play a role in the assembly of N-DRC. May be required for sperm motility. The chain is Dynein regulatory complex subunit 5 (TCTE1) from Homo sapiens (Human).